Here is a 156-residue protein sequence, read N- to C-terminus: Endoribonuclease YbeY (156 aa).

Zn(2+)-binding residues include His-122, His-126, and His-132.

This sequence belongs to the endoribonuclease YbeY family. Requires Zn(2+) as cofactor.

It localises to the cytoplasm. Single strand-specific metallo-endoribonuclease involved in late-stage 70S ribosome quality control and in maturation of the 3' terminus of the 16S rRNA. This is Endoribonuclease YbeY from Bacillus cereus (strain ZK / E33L).